Reading from the N-terminus, the 230-residue chain is Probable endonuclease C19F8.04c (230 aa).

Residues 10-27 (AIIGTGLITTSIGGFFFL) form a helical membrane-spanning segment. Residues 55-216 (KTMFGYVTRV…KKKKLSLWSQ (162 aa)) form the TNase-like domain. The active site involves R104. Residue D109 participates in Ca(2+) binding. Active-site residues include E112 and R152.

It belongs to the LCL3 family.

Its subcellular location is the mitochondrion. The protein resides in the membrane. The protein is Probable endonuclease C19F8.04c of Schizosaccharomyces pombe (strain 972 / ATCC 24843) (Fission yeast).